A 342-amino-acid chain; its full sequence is Dihydroorotate dehydrogenase (quinone) (342 aa).

FMN-binding positions include 61 to 65 (AGLDK) and threonine 85. Lysine 65 contributes to the substrate binding site. 110–114 (NRMGF) lines the substrate pocket. Residues asparagine 138 and asparagine 171 each contribute to the FMN site. Asparagine 171 is a binding site for substrate. Residue serine 174 is the Nucleophile of the active site. Asparagine 176 contacts substrate. FMN is bound by residues lysine 216 and threonine 244. 245–246 (NT) is a binding site for substrate. Residues glycine 267, glycine 296, and 317–318 (YS) contribute to the FMN site.

Belongs to the dihydroorotate dehydrogenase family. Type 2 subfamily. In terms of assembly, monomer. FMN serves as cofactor.

The protein localises to the cell membrane. The catalysed reaction is (S)-dihydroorotate + a quinone = orotate + a quinol. Its pathway is pyrimidine metabolism; UMP biosynthesis via de novo pathway; orotate from (S)-dihydroorotate (quinone route): step 1/1. Functionally, catalyzes the conversion of dihydroorotate to orotate with quinone as electron acceptor. The sequence is that of Dihydroorotate dehydrogenase (quinone) from Cellvibrio japonicus (strain Ueda107) (Pseudomonas fluorescens subsp. cellulosa).